A 286-amino-acid polypeptide reads, in one-letter code: ATP synthase gamma chain (286 aa).

The protein belongs to the ATPase gamma chain family. As to quaternary structure, F-type ATPases have 2 components, CF(1) - the catalytic core - and CF(0) - the membrane proton channel. CF(1) has five subunits: alpha(3), beta(3), gamma(1), delta(1), epsilon(1). CF(0) has three main subunits: a, b and c.

Its subcellular location is the cell inner membrane. Functionally, produces ATP from ADP in the presence of a proton gradient across the membrane. The gamma chain is believed to be important in regulating ATPase activity and the flow of protons through the CF(0) complex. This chain is ATP synthase gamma chain, found in Shewanella loihica (strain ATCC BAA-1088 / PV-4).